The primary structure comprises 137 residues: Large ribosomal subunit protein uL16 (137 aa).

This sequence belongs to the universal ribosomal protein uL16 family. In terms of assembly, part of the 50S ribosomal subunit.

Binds 23S rRNA and is also seen to make contacts with the A and possibly P site tRNAs. The chain is Large ribosomal subunit protein uL16 from Legionella pneumophila (strain Paris).